We begin with the raw amino-acid sequence, 419 residues long: MGRKSNESCSSSLHVSSISQENHSQWNLDAEELFDEKETFSSENDGAAGGKTNKSHLENPAEQLILQLTVSEHAHSRSQQNSSQGVFQLWSSPVNKGSTVDKRNSSVEENVTDESDLSENEKMNDSLLSYFKKMDLNLKPETIEHVERPFPEEAGQVPVYADFLPAPFNTLDLHRFAFSKCESWKAAVEPPESSIERLILRLLELERLQHMTIQRERPRLQSTFYSSMFSMAERPSSSKAIATKAKAPKIPETSTLQTSGVDKNRDKRKNNSGSGKPEQNVSKWSLSSAGKSKSNSRALLKCSSTSKQCAVAHDDLKNSKNSSLNPCQEPPLKPTTTTQATQPMARVVSRCLPPRSPMPVSPIPLSFPENPREEGKVPRTKKKCHRKSILLNRAFYIQKRNCLSPSLIARGKCSPTDQK.

4 disordered regions span residues 1 to 60, 96 to 119, 236 to 299, and 317 to 382; these read MGRK…LENP, KGST…DLSE, SSSK…SRAL, and KNSK…RTKK. Residues 7 to 19 show a composition bias toward low complexity; the sequence is ESCSSSLHVSSIS. The span at 236 to 251 shows a compositional bias: low complexity; it reads SSSKAIATKAKAPKIP. 2 stretches are compositionally biased toward polar residues: residues 252–261 and 271–281; these read ETSTLQTSGV and NSGSGKPEQNV. Low complexity-rich tracts occupy residues 282–296 and 334–345; these read SKWS…KSNS and PTTTTQATQPMA.

The protein belongs to the FAM217 family.

This chain is Protein FAM217A (Fam217a), found in Mus musculus (Mouse).